The following is a 290-amino-acid chain: 33 kDa chaperonin (290 aa).

2 cysteine pairs are disulfide-bonded: C235–C237 and C268–C271.

The protein belongs to the HSP33 family. Under oxidizing conditions two disulfide bonds are formed involving the reactive cysteines. Under reducing conditions zinc is bound to the reactive cysteines and the protein is inactive.

The protein localises to the cytoplasm. In terms of biological role, redox regulated molecular chaperone. Protects both thermally unfolding and oxidatively damaged proteins from irreversible aggregation. Plays an important role in the bacterial defense system toward oxidative stress. This chain is 33 kDa chaperonin, found in Streptococcus sanguinis (strain SK36).